Reading from the N-terminus, the 365-residue chain is Chorismate synthase (365 aa).

Positions 48 and 54 each coordinate NADP(+). FMN-binding positions include 131 to 133 (RSS), 243 to 244 (NA), Gly288, 303 to 307 (KPTSS), and Arg329.

The protein belongs to the chorismate synthase family. Homotetramer. Requires FMNH2 as cofactor.

The enzyme catalyses 5-O-(1-carboxyvinyl)-3-phosphoshikimate = chorismate + phosphate. The protein operates within metabolic intermediate biosynthesis; chorismate biosynthesis; chorismate from D-erythrose 4-phosphate and phosphoenolpyruvate: step 7/7. Its function is as follows. Catalyzes the anti-1,4-elimination of the C-3 phosphate and the C-6 proR hydrogen from 5-enolpyruvylshikimate-3-phosphate (EPSP) to yield chorismate, which is the branch point compound that serves as the starting substrate for the three terminal pathways of aromatic amino acid biosynthesis. This reaction introduces a second double bond into the aromatic ring system. This chain is Chorismate synthase, found in Rhizobium etli (strain CIAT 652).